We begin with the raw amino-acid sequence, 360 residues long: Putative F-box protein At3g47150 (360 aa).

Positions asparagine 6 to threonine 56 constitute an F-box domain.

The polypeptide is Putative F-box protein At3g47150 (Arabidopsis thaliana (Mouse-ear cress)).